Here is a 124-residue protein sequence, read N- to C-terminus: Small ribosomal subunit protein uS12 (124 aa).

Residues 1-22 (MATINQLVRKPRKRKVAKSDVP) form a disordered region. Asp-89 is modified (3-methylthioaspartic acid). The interval 101-124 (TLDTQGVQNRKQGRSKYGAKRPKS) is disordered. The span at 111 to 124 (KQGRSKYGAKRPKS) shows a compositional bias: basic residues.

The protein belongs to the universal ribosomal protein uS12 family. In terms of assembly, part of the 30S ribosomal subunit. Contacts proteins S8 and S17. May interact with IF1 in the 30S initiation complex.

Functionally, with S4 and S5 plays an important role in translational accuracy. In terms of biological role, interacts with and stabilizes bases of the 16S rRNA that are involved in tRNA selection in the A site and with the mRNA backbone. Located at the interface of the 30S and 50S subunits, it traverses the body of the 30S subunit contacting proteins on the other side and probably holding the rRNA structure together. The combined cluster of proteins S8, S12 and S17 appears to hold together the shoulder and platform of the 30S subunit. In Marinobacter nauticus (strain ATCC 700491 / DSM 11845 / VT8) (Marinobacter aquaeolei), this protein is Small ribosomal subunit protein uS12.